The following is a 177-amino-acid chain: Large ribosomal subunit protein uL6 (177 aa).

This sequence belongs to the universal ribosomal protein uL6 family. In terms of assembly, part of the 50S ribosomal subunit.

In terms of biological role, this protein binds to the 23S rRNA, and is important in its secondary structure. It is located near the subunit interface in the base of the L7/L12 stalk, and near the tRNA binding site of the peptidyltransferase center. The polypeptide is Large ribosomal subunit protein uL6 (Rhizobium rhizogenes (strain K84 / ATCC BAA-868) (Agrobacterium radiobacter)).